The primary structure comprises 322 residues: Beta-1,3-galactosyltransferase bre-5 (322 aa).

Residues 1–16 (MFLCVRILKRKYHELS) lie on the Cytoplasmic side of the membrane. A helical; Signal-anchor for type II membrane protein transmembrane segment spans residues 17–37 (SFQKLLIFTITIFLLWVLGVV). Residues 38-322 (DKFRETSFGD…YEYSQLNGFE (285 aa)) lie on the Lumenal side of the membrane. Asparagine 150 carries N-linked (GlcNAc...) asparagine glycosylation.

This sequence belongs to the glycosyltransferase 31 family. Expressed in the gut.

It localises to the golgi apparatus membrane. Its pathway is protein modification; protein glycosylation. In terms of biological role, transfers N-acetylgalactosamine onto mannose groups of carbohydrate substrates. Required for susceptibility to pore-forming crystal toxins in conjunction with bre-1, bre-2, bre-3, and bre-4. Involved in resistance to the nematotoxic C.cinerea galectin Cgl2. This is Beta-1,3-galactosyltransferase bre-5 from Caenorhabditis elegans.